A 187-amino-acid polypeptide reads, in one-letter code: Large ribosomal subunit protein eL18y (187 aa).

Residues 151 to 187 (FGPAPGVPHSHSKPYVRAKGRKFEKARGKRKSRGFKV) are disordered. 2 stretches are compositionally biased toward basic residues: residues 160–170 (SHSKPYVRAKG) and 177–187 (RGKRKSRGFKV).

Belongs to the eukaryotic ribosomal protein eL18 family. Interacts with NIK1. Interacts directly with EXA1. In terms of tissue distribution, ubiquitous.

It localises to the cytoplasm. This chain is Large ribosomal subunit protein eL18y (RPL18B), found in Arabidopsis thaliana (Mouse-ear cress).